The following is a 545-amino-acid chain: Bifunctional purine biosynthesis protein PurH (545 aa).

In terms of domain architecture, MGS-like spans 1-150 (MTNTNRPIRR…KNHATVAIVT (150 aa)).

The protein belongs to the PurH family.

It carries out the reaction (6R)-10-formyltetrahydrofolate + 5-amino-1-(5-phospho-beta-D-ribosyl)imidazole-4-carboxamide = 5-formamido-1-(5-phospho-D-ribosyl)imidazole-4-carboxamide + (6S)-5,6,7,8-tetrahydrofolate. The catalysed reaction is IMP + H2O = 5-formamido-1-(5-phospho-D-ribosyl)imidazole-4-carboxamide. The protein operates within purine metabolism; IMP biosynthesis via de novo pathway; 5-formamido-1-(5-phospho-D-ribosyl)imidazole-4-carboxamide from 5-amino-1-(5-phospho-D-ribosyl)imidazole-4-carboxamide (10-formyl THF route): step 1/1. It participates in purine metabolism; IMP biosynthesis via de novo pathway; IMP from 5-formamido-1-(5-phospho-D-ribosyl)imidazole-4-carboxamide: step 1/1. The chain is Bifunctional purine biosynthesis protein PurH from Bifidobacterium longum (strain DJO10A).